The sequence spans 492 residues: Protein nucleotidyltransferase YdiU (492 aa).

Residues Gly-88, Gly-90, Arg-91, Lys-111, Asp-123, Gly-124, Arg-174, and Arg-181 each contribute to the ATP site. The active-site Proton acceptor is the Asp-250. Mg(2+)-binding residues include Asn-251 and Asp-260. Asp-260 lines the ATP pocket.

This sequence belongs to the SELO family. Requires Mg(2+) as cofactor. The cofactor is Mn(2+).

It catalyses the reaction L-seryl-[protein] + ATP = 3-O-(5'-adenylyl)-L-seryl-[protein] + diphosphate. The enzyme catalyses L-threonyl-[protein] + ATP = 3-O-(5'-adenylyl)-L-threonyl-[protein] + diphosphate. The catalysed reaction is L-tyrosyl-[protein] + ATP = O-(5'-adenylyl)-L-tyrosyl-[protein] + diphosphate. It carries out the reaction L-histidyl-[protein] + UTP = N(tele)-(5'-uridylyl)-L-histidyl-[protein] + diphosphate. It catalyses the reaction L-seryl-[protein] + UTP = O-(5'-uridylyl)-L-seryl-[protein] + diphosphate. The enzyme catalyses L-tyrosyl-[protein] + UTP = O-(5'-uridylyl)-L-tyrosyl-[protein] + diphosphate. In terms of biological role, nucleotidyltransferase involved in the post-translational modification of proteins. It can catalyze the addition of adenosine monophosphate (AMP) or uridine monophosphate (UMP) to a protein, resulting in modifications known as AMPylation and UMPylation. This is Protein nucleotidyltransferase YdiU from Rhodopseudomonas palustris (strain BisB5).